The primary structure comprises 72 residues: Protein LITTLE ZIPPER 4 (72 aa).

Positions 14–44 form a coiled coil; that stretch reads YIIKENERLRKKAQILNQENQQLLFELKQKL. The interval 42–72 is disordered; it reads QKLSKTKNSSGSNQGNNNNNNNLSSSSSASG. Low complexity predominate over residues 49-72; the sequence is NSSGSNQGNNNNNNNLSSSSSASG.

Interacts with REV.

Functionally, competitive inhibitor of the HD-ZIPIII transcription factors in shoot apical meristem (SAM) development. Acts by forming non-functional heterodimers. Part of a negative feedback loop. Essential for proper functioning of stem cells in the SAM. The sequence is that of Protein LITTLE ZIPPER 4 from Arabidopsis thaliana (Mouse-ear cress).